We begin with the raw amino-acid sequence, 1225 residues long: DNA-directed RNA polymerase subunit beta' (1225 aa).

Zn(2+) is bound by residues C60, C62, C75, and C78. Residues D450, D452, and D454 each contribute to the Mg(2+) site. C818, C892, C899, and C902 together coordinate Zn(2+).

It belongs to the RNA polymerase beta' chain family. In terms of assembly, the RNAP catalytic core consists of 2 alpha, 1 beta, 1 beta' and 1 omega subunit. When a sigma factor is associated with the core the holoenzyme is formed, which can initiate transcription. Requires Mg(2+) as cofactor. The cofactor is Zn(2+).

It catalyses the reaction RNA(n) + a ribonucleoside 5'-triphosphate = RNA(n+1) + diphosphate. Its function is as follows. DNA-dependent RNA polymerase catalyzes the transcription of DNA into RNA using the four ribonucleoside triphosphates as substrates. The protein is DNA-directed RNA polymerase subunit beta' of Streptococcus pneumoniae (strain ATCC BAA-255 / R6).